A 425-amino-acid chain; its full sequence is CDP-diacylglycerol--serine O-phosphatidyltransferase 1 (425 aa).

The span at 1–16 (MEPNGYRKERRKEQHL) shows a compositional bias: basic and acidic residues. Positions 1-23 (MEPNGYRKERRKEQHLGRMNGGG) are disordered. A run of 9 helical transmembrane segments spans residues 42–62 (TISLLLIGACFLIWASGALDP), 79–99 (WAMIAVFLAYSLLQAPSTVLI), 105–125 (IWRLVHGMAVIYLVALTFLLF), 197–217 (PLLWVLSIGFELLEVTFRHML), 227–247 (SIVLDILICNWFGIWAGMYTV), 296–316 (FIQVLTLCIIFLTVELNTFFL), 321–341 (WIPPRNPVILYRLILWWLIAI), 361–381 (GAFCWLSLGICIVELLICIKF), and 390–410 (MPLWVVTLWGSVGLGLVAFLL).

It belongs to the CDP-alcohol phosphatidyltransferase class-I family. As to expression, expressed in trichomes, leaf veins and root vasculature.

The protein resides in the endoplasmic reticulum membrane. It localises to the nucleus envelope. The catalysed reaction is a CDP-1,2-diacyl-sn-glycerol + L-serine = a 1,2-diacyl-sn-glycero-3-phospho-L-serine + CMP + H(+). It participates in phospholipid metabolism; phosphatidylethanolamine biosynthesis; phosphatidylethanolamine from CDP-diacylglycerol: step 1/2. Functionally, catalyzes a base-exchange reaction in which the polar head group of phosphatidylethanolamine (PE) or phosphatidylcholine (PC) is replaced by L-serine. Is essential for phosphatidylserine (PS) biosynthesis and PE seems to be the most plausible substrate. Plays an important role in microspore maturation. The polypeptide is CDP-diacylglycerol--serine O-phosphatidyltransferase 1 (PSS1) (Arabidopsis thaliana (Mouse-ear cress)).